Consider the following 635-residue polypeptide: Sodium- and chloride-dependent transporter XTRP3B (635 aa).

Residues M1–C38 form a disordered region. Residues M1–Q56 lie on the Cytoplasmic side of the membrane. Residues F57–L77 traverse the membrane as a helical segment. The Extracellular portion of the chain corresponds to C78–N85. The chain crosses the membrane as a helical span at residues F86–L106. At A107–L127 the chain is on the cytoplasmic side. A helical transmembrane segment spans residues S128–I148. Residues N149 to G208 are Extracellular-facing. A glycan (N-linked (GlcNAc...) asparagine) is linked at N174. A helical transmembrane segment spans residues V209–L229. The Cytoplasmic segment spans residues R230–K237. A helical transmembrane segment spans residues V238 to L258. The Extracellular segment spans residues T259–W284. Residues I285–F305 traverse the membrane as a helical segment. Residues A306–A319 lie on the Cytoplasmic side of the membrane. Residues L320–I340 form a helical membrane-spanning segment. The Extracellular segment spans residues Y341 to Q432. Residue N400 is glycosylated (N-linked (GlcNAc...) asparagine). Residues L433–T453 traverse the membrane as a helical segment. The Cytoplasmic portion of the chain corresponds to G454 to E474. A helical membrane pass occupies residues A475–A495. The Extracellular portion of the chain corresponds to G496 to A508. A helical membrane pass occupies residues T509–L529. Residues K530–Y547 lie on the Cytoplasmic side of the membrane. A helical membrane pass occupies residues W548–L568. The Extracellular portion of the chain corresponds to S569–Y597. A helical membrane pass occupies residues A598–L618. The Cytoplasmic portion of the chain corresponds to G619 to A635.

The protein belongs to the sodium:neurotransmitter symporter (SNF) (TC 2.A.22) family. SLC6A20 subfamily. Interacts with CLTRN. Detected only in kidney and lung.

The protein resides in the apical cell membrane. Does not show transporter activity with a range of tested amino acids including proline, glutamine, glutamic acid, leucine, alanine, histidine, glycine and arginine. This chain is Sodium- and chloride-dependent transporter XTRP3B (Slc6a20b), found in Mus musculus (Mouse).